We begin with the raw amino-acid sequence, 247 residues long: MPEKTIQEEIQTIIPELFPILEPEFDWELVKNFYDFLKRDNEKGGFFSKNDSEKILERHILESLIFVWKLKTTGYVSRETNVADVGTGPGLPGFLFAVLKKAPQVFLVDSQKRKLALLEAEITTGSLSKVKKRVEFIYARTEEISSNFDVVTSRAMVPYPYLAEVTTRMVKQKGILCPFLAQPYQDLEKETEVLSNNGFVLKKEILIPELEFVGKRHIKILQKNSLPKKGYPRDWKEIVKETKSKNG.

3 residues coordinate S-adenosyl-L-methionine: Gly-86, Leu-91, and Arg-154.

The protein belongs to the methyltransferase superfamily. RNA methyltransferase RsmG family.

Its subcellular location is the cytoplasm. Specifically methylates the N7 position of a guanine in 16S rRNA. The sequence is that of Ribosomal RNA small subunit methyltransferase G from Leptospira biflexa serovar Patoc (strain Patoc 1 / Ames).